The chain runs to 198 residues: Recombination protein RecR (198 aa).

The segment at 57-72 (CSICGNITEEDPCEIC) adopts a C4-type zinc-finger fold. A Toprim domain is found at 80-175 (SIILVVEEPK…TVTRLAHGLS (96 aa)).

Belongs to the RecR family.

Its function is as follows. May play a role in DNA repair. It seems to be involved in an RecBC-independent recombinational process of DNA repair. It may act with RecF and RecO. The polypeptide is Recombination protein RecR (Enterococcus faecalis (strain ATCC 700802 / V583)).